Reading from the N-terminus, the 156-residue chain is MPRRRVIGQRKILPDPKFGSELLAKFVNILMVDGKKSTAEAIVYSALETLAQRSDKNALEAFEVALDNVRPTVEVKSRRVGGSTYQVPVEVRPVRRNALAMRWIVEAARKRGDKSMALRLANELSDAADNKGTAVKKREDVHRMAEANKAFAHYRW.

The protein belongs to the universal ribosomal protein uS7 family. As to quaternary structure, part of the 30S ribosomal subunit. Contacts proteins S9 and S11.

One of the primary rRNA binding proteins, it binds directly to 16S rRNA where it nucleates assembly of the head domain of the 30S subunit. Is located at the subunit interface close to the decoding center, probably blocks exit of the E-site tRNA. This is Small ribosomal subunit protein uS7 from Enterobacter sp. (strain 638).